A 447-amino-acid polypeptide reads, in one-letter code: Protein cortex (447 aa).

WD repeat units lie at residues 108–148 (TYSY…IGHG), 149–188 (FAEYEIQCCKFDPRGELLALGTYMKTLEIHNNSKSKKIMS), 198–237 (NMNCSITAVDWSPTGNSFAAGCSGGAVTSFTRAAKLISWR), 281–325 (DSDW…VRDT), 344–380 (GELVLSMWHSDRATLHPKTCSQLVVLSDPDTMVDQWG), and 384–423 (SGLDRVRTMIFSPDGTKLATATTDEDLIIWNFLPEDNKMK). A D-box motif is present at residues 384-395 (SGLDRVRTMIFS).

It belongs to the WD repeat CORT family.

The protein resides in the cytoplasm. Its function is as follows. Controls wing pigmentation patterning by regulating scale cell development, thereby playing a key role in mimicry and crypsis. Probably acts as an activator of the anaphase promoting complex/cyclosome (APC/C) that promotes the ubiquitin ligase activity and substrate specificity of the APC/C. The chain is Protein cortex from Heliconius melpomene (Postman butterfly).